The chain runs to 576 residues: Arginine--tRNA ligase (576 aa).

Positions 122–132 (PNVAKQMHVGH) match the 'HIGH' region motif.

It belongs to the class-I aminoacyl-tRNA synthetase family. As to quaternary structure, monomer.

Its subcellular location is the cytoplasm. The enzyme catalyses tRNA(Arg) + L-arginine + ATP = L-arginyl-tRNA(Arg) + AMP + diphosphate. This chain is Arginine--tRNA ligase, found in Yersinia pestis bv. Antiqua (strain Antiqua).